Reading from the N-terminus, the 76-residue chain is MARGQQKIQSQQKNAKKQAEQKKKQGHDQKAAAKAALIYTCTVCRTQMPDPKTFKQHFESKHPKTPLPPELADVQA.

Residues Met1 to Lys13 are compositionally biased toward low complexity. Disordered stretches follow at residues Met1–Ala32 and Thr53–Ala76. 2 stretches are compositionally biased toward basic and acidic residues: residues Lys17–Ala31 and Thr53–His62. The segment at Tyr39–His62 adopts a C2H2-type zinc-finger fold.

It is found in the cytoplasm. It localises to the nucleus. Its function is as follows. Transcription repressor involved in the exit of embryonic stem cells (ESCs) from self-renewal. This chain is Zinc finger protein 706, found in Gallus gallus (Chicken).